A 172-amino-acid chain; its full sequence is Gastrula zinc finger protein XlCGF51.1A (172 aa).

C2H2-type zinc fingers lie at residues 6–28 (FSCS…NKIH), 34–56 (LICS…QRSH), 62–84 (FSCT…QRTH), 90–112 (FSCT…MLKH), 122–144 (LDCS…RKSH), and 150–172 (LQCS…QRVH).

It belongs to the krueppel C2H2-type zinc-finger protein family.

The protein resides in the nucleus. Functionally, may be involved in transcriptional regulation. The protein is Gastrula zinc finger protein XlCGF51.1A of Xenopus laevis (African clawed frog).